A 95-amino-acid chain; its full sequence is Small ribosomal subunit protein bS6 (95 aa).

The protein belongs to the bacterial ribosomal protein bS6 family.

Functionally, binds together with bS18 to 16S ribosomal RNA. This chain is Small ribosomal subunit protein bS6, found in Corynebacterium efficiens (strain DSM 44549 / YS-314 / AJ 12310 / JCM 11189 / NBRC 100395).